An 89-amino-acid polypeptide reads, in one-letter code: Acyl carrier protein MbtL (89 aa).

A Carrier domain is found at 8–83 (NHVSAELLGI…DLQAAIAAEP (76 aa)). Ser43 carries the O-(pantetheine 4'-phosphoryl)serine modification.

4'-phosphopantetheine is transferred from CoA to a specific serine of apo-ACP, leading to the activated holo-ACP form.

It is found in the cytoplasm. It participates in siderophore biosynthesis; mycobactin biosynthesis. Acyl carrier protein involved in the formation of acyl-S-ACP intermediates within the mycobactin biosynthesis process. This is Acyl carrier protein MbtL (mbtL) from Mycolicibacterium paratuberculosis (strain ATCC BAA-968 / K-10) (Mycobacterium paratuberculosis).